We begin with the raw amino-acid sequence, 353 residues long: UDP-3-O-acylglucosamine N-acyltransferase (353 aa).

Residue His-242 is the Proton acceptor of the active site.

This sequence belongs to the transferase hexapeptide repeat family. LpxD subfamily. In terms of assembly, homotrimer.

The enzyme catalyses a UDP-3-O-[(3R)-3-hydroxyacyl]-alpha-D-glucosamine + a (3R)-hydroxyacyl-[ACP] = a UDP-2-N,3-O-bis[(3R)-3-hydroxyacyl]-alpha-D-glucosamine + holo-[ACP] + H(+). Its pathway is bacterial outer membrane biogenesis; LPS lipid A biosynthesis. Functionally, catalyzes the N-acylation of UDP-3-O-acylglucosamine using 3-hydroxyacyl-ACP as the acyl donor. Is involved in the biosynthesis of lipid A, a phosphorylated glycolipid that anchors the lipopolysaccharide to the outer membrane of the cell. This is UDP-3-O-acylglucosamine N-acyltransferase from Pseudomonas aeruginosa (strain UCBPP-PA14).